Reading from the N-terminus, the 108-residue chain is ATP synthase peripheral stalk subunit F6, mitochondrial (108 aa).

A mitochondrion-targeting transit peptide spans 1–32 (MILQRLFRLSSAVQSAISVSWRRNIGITAVAF). Residues Lys41, Lys46, and Lys79 each carry the N6-acetyllysine modification. N6-acetyllysine; alternate occurs at positions 84 and 99. N6-succinyllysine; alternate is present on residues Lys84 and Lys99. Lys105 is modified (N6-acetyllysine). Ser108 is subject to Phosphoserine.

It belongs to the eukaryotic ATPase subunit F6 family. As to quaternary structure, component of the ATP synthase complex composed at least of ATP5F1A/subunit alpha, ATP5F1B/subunit beta, ATP5MC1/subunit c (homooctomer), MT-ATP6/subunit a, MT-ATP8/subunit 8, ATP5ME/subunit e, ATP5MF/subunit f, ATP5MG/subunit g, ATP5MK/subunit k, ATP5MJ/subunit j, ATP5F1C/subunit gamma, ATP5F1D/subunit delta, ATP5F1E/subunit epsilon, ATP5PF/subunit F6, ATP5PB/subunit b, ATP5PD/subunit d, ATP5PO/subunit OSCP. ATP synthase complex consists of a soluble F(1) head domain (subunits alpha(3) and beta(3)) - the catalytic core - and a membrane F(0) domain - the membrane proton channel (subunits c, a, 8, e, f, g, k and j). These two domains are linked by a central stalk (subunits gamma, delta, and epsilon) rotating inside the F1 region and a stationary peripheral stalk (subunits F6, b, d, and OSCP).

Its subcellular location is the mitochondrion. The protein localises to the mitochondrion inner membrane. Functionally, subunit F6, of the mitochondrial membrane ATP synthase complex (F(1)F(0) ATP synthase or Complex V) that produces ATP from ADP in the presence of a proton gradient across the membrane which is generated by electron transport complexes of the respiratory chain. ATP synthase complex consist of a soluble F(1) head domain - the catalytic core - and a membrane F(1) domain - the membrane proton channel. These two domains are linked by a central stalk rotating inside the F(1) region and a stationary peripheral stalk. During catalysis, ATP synthesis in the catalytic domain of F(1) is coupled via a rotary mechanism of the central stalk subunits to proton translocation. In vivo, can only synthesize ATP although its ATP hydrolase activity can be activated artificially in vitro. Part of the complex F(0) domain. Part of the complex F(0) domain and the peripheric stalk, which acts as a stator to hold the catalytic alpha(3)beta(3) subcomplex and subunit a/ATP6 static relative to the rotary elements. This chain is ATP synthase peripheral stalk subunit F6, mitochondrial, found in Bos taurus (Bovine).